The primary structure comprises 442 residues: Histidine--tRNA ligase (442 aa).

This sequence belongs to the class-II aminoacyl-tRNA synthetase family. Homodimer.

It is found in the cytoplasm. It carries out the reaction tRNA(His) + L-histidine + ATP = L-histidyl-tRNA(His) + AMP + diphosphate + H(+). This Helicobacter pylori (strain HPAG1) protein is Histidine--tRNA ligase.